A 537-amino-acid chain; its full sequence is 2-isopropylmalate synthase (537 aa).

The 266-residue stretch at 8-273 (IIIFDTTLRD…FLGRPVDSME (266 aa)) folds into the Pyruvate carboxyltransferase domain. Positions 17, 208, 210, and 244 each coordinate Mn(2+). Positions 408-537 (RLELVQVSCG…PSEPVLTSKN (130 aa)) are regulatory domain.

The protein belongs to the alpha-IPM synthase/homocitrate synthase family. LeuA type 1 subfamily. In terms of assembly, homodimer. It depends on Mn(2+) as a cofactor.

The protein resides in the cytoplasm. It catalyses the reaction 3-methyl-2-oxobutanoate + acetyl-CoA + H2O = (2S)-2-isopropylmalate + CoA + H(+). Its pathway is amino-acid biosynthesis; L-leucine biosynthesis; L-leucine from 3-methyl-2-oxobutanoate: step 1/4. Its function is as follows. Catalyzes the condensation of the acetyl group of acetyl-CoA with 3-methyl-2-oxobutanoate (2-ketoisovalerate) to form 3-carboxy-3-hydroxy-4-methylpentanoate (2-isopropylmalate). The chain is 2-isopropylmalate synthase from Crocosphaera subtropica (strain ATCC 51142 / BH68) (Cyanothece sp. (strain ATCC 51142)).